Reading from the N-terminus, the 454-residue chain is Notoamide E oxidase notB (454 aa).

The chain crosses the membrane as a helical span at residues 15-35 (SPAELTVIIVGLGIAGLTAAI). Positions 48 and 61 each coordinate FAD. Asn-75 is a glycosylation site (N-linked (GlcNAc...) asparagine). Arg-121 is a binding site for FAD. Residues Arg-199 and Tyr-229 contribute to the active site. 2 residues coordinate FAD: Asp-322 and Gly-335.

Belongs to the paxM FAD-dependent monooxygenase family. It depends on FAD as a cofactor.

It is found in the membrane. It carries out the reaction notoamide E + NADPH + O2 + H(+) = notoamide C + NADP(+) + H2O. The enzyme catalyses notoamide E + NADPH + O2 + H(+) = notoamide D + NADP(+) + H2O. The protein operates within alkaloid biosynthesis. Its function is as follows. FAD-dependent monooxygenase; part of the gene cluster that mediates the biosynthesis of notoamide, a fungal indole alkaloid that belongs to a family of natural products containing a characteristic bicyclo[2.2.2]diazaoctane core. The first step of notoamide biosynthesis involves coupling of L-proline and L-tryptophan by the bimodular NRPS notE, to produce cyclo-L-tryptophan-L-proline called brevianamide F. The reverse prenyltransferase notF then acts as a deoxybrevianamide E synthase and converts brevianamide F to deoxybrevianamide E via reverse prenylation at C-2 of the indole ring leading to the bicyclo[2.2.2]diazaoctane core. Deoxybrevianamide E is further hydroxylated at C-6 of the indole ring, likely catalyzed by the cytochrome P450 monooxygenase notG, to yield 6-hydroxy-deoxybrevianamide E. 6-hydroxy-deoxybrevianamide E is a specific substrate of the prenyltransferase notC for normal prenylation at C-7 to produce 6-hydroxy-7-prenyl-deoxybrevianamide, also called notoamide S. As the proposed pivotal branching point in notoamide biosynthesis, notoamide S can be diverted to notoamide E through an oxidative pyran ring closure putatively catalyzed by either notH cytochrome P450 monooxygenase or the notD FAD-linked oxidoreductase. This step would be followed by an indole 2,3-epoxidation-initiated pinacol-like rearrangement catalyzed by the notB FAD-dependent monooxygenase leading to the formation of notoamide C and notoamide D. On the other hand notoamide S is converted to notoamide T by notH (or notD), a bifunctional oxidase that also functions as the intramolecular Diels-Alderase responsible for generation of (+)-notoamide T. To generate antipodal (-)-notoaminide T, notH' (or notD') in Aspergillus versicolor is expected to catalyze a Diels-Alder reaction leading to the opposite stereochemistry. The remaining oxidoreductase notD (or notH) likely catalyzes the oxidative pyran ring formation to yield (+)-stephacidin A. The FAD-dependent monooxygenase notI is highly similar to notB and is predicted to catalyze a similar conversion from (+)-stephacidin A to (-)-notoamide B via the 2,3-epoxidation of (+)-stephacidin A followed by a pinacol-type rearrangement. Finally, it remains unclear which enzyme could be responsible for the final hydroxylation steps leading to notoamide A and sclerotiamide. The polypeptide is Notoamide E oxidase notB (Aspergillus sp. (strain MF297-2)).